Here is a 192-residue protein sequence, read N- to C-terminus: ADP-ribosylation factor-like protein 4C (192 aa).

G2 carries the N-myristoyl glycine lipid modification. GTP contacts are provided by residues 20-27, 68-72, and 127-130; these read GLDSAGKT, DVGGQ, and NKQD.

It belongs to the small GTPase superfamily. Arf family. As to quaternary structure, interacts with CYTH2. Interacts with alpha tubulin; interaction is independent on the ARL4C GTP or GDP binding status. As to expression, expressed in several tumor cell lines (at protein level). Expressed in lung, brain, leukocytes and placenta.

The protein localises to the cell projection. The protein resides in the filopodium. It is found in the cell membrane. It localises to the cytoplasm. Functionally, small GTP-binding protein which cycles between an inactive GDP-bound and an active GTP-bound form, and the rate of cycling is regulated by guanine nucleotide exchange factors (GEF) and GTPase-activating proteins (GAP). GTP-binding protein that does not act as an allosteric activator of the cholera toxin catalytic subunit. May be involved in transport between a perinuclear compartment and the plasma membrane, apparently linked to the ABCA1-mediated cholesterol secretion pathway. Recruits CYTH1, CYTH2, CYTH3 and CYTH4 to the plasma membrane in the GDP-bound form. Regulates the microtubule-dependent intracellular vesicular transport from early endosome to recycling endosome process. The polypeptide is ADP-ribosylation factor-like protein 4C (ARL4C) (Homo sapiens (Human)).